Here is a 257-residue protein sequence, read N- to C-terminus: Thiazole synthase (257 aa).

Catalysis depends on lysine 95, which acts as the Schiff-base intermediate with DXP. 1-deoxy-D-xylulose 5-phosphate-binding positions include glycine 156, 182–183 (AG), and 204–205 (NT).

The protein belongs to the ThiG family. As to quaternary structure, homotetramer. Forms heterodimers with either ThiH or ThiS.

It localises to the cytoplasm. The catalysed reaction is [ThiS sulfur-carrier protein]-C-terminal-Gly-aminoethanethioate + 2-iminoacetate + 1-deoxy-D-xylulose 5-phosphate = [ThiS sulfur-carrier protein]-C-terminal Gly-Gly + 2-[(2R,5Z)-2-carboxy-4-methylthiazol-5(2H)-ylidene]ethyl phosphate + 2 H2O + H(+). Its pathway is cofactor biosynthesis; thiamine diphosphate biosynthesis. Catalyzes the rearrangement of 1-deoxy-D-xylulose 5-phosphate (DXP) to produce the thiazole phosphate moiety of thiamine. Sulfur is provided by the thiocarboxylate moiety of the carrier protein ThiS. In vitro, sulfur can be provided by H(2)S. This is Thiazole synthase from Vibrio vulnificus (strain CMCP6).